Consider the following 1172-residue polypeptide: Thrombospondin-2 (1172 aa).

A signal peptide spans 1–18 (MLWALALLALGIGPRASA). The Laminin G-like domain maps to 19-215 (GDHVKDTSFD…LQNVHLVFAD (197 aa)). A heparin-binding region spans residues 19–232 (GDHVKDTSFD…KKGCQHSQGA (214 aa)). Residues Asn-151, Asn-316, and Asn-330 are each glycosylated (N-linked (GlcNAc...) asparagine). Residues 318 to 375 (SACVQEGRIFAENETWVVDSCTTCTCKKFKTVCHQITCSPATCANPSFVEGECCPSCS) enclose the VWFC domain. TSP type-1 domains follow at residues 381–431 (DEGW…GKCD), 437–492 (NGGW…DPCP), and 494–549 (DGRW…RSCP). 27 cysteine pairs are disulfide-bonded: Cys-393/Cys-425, Cys-397/Cys-430, Cys-408/Cys-415, Cys-449/Cys-486, Cys-453/Cys-491, Cys-464/Cys-476, Cys-506/Cys-543, Cys-510/Cys-548, Cys-521/Cys-533, Cys-553/Cys-564, Cys-558/Cys-574, Cys-577/Cys-588, Cys-594/Cys-610, Cys-601/Cys-619, Cys-622/Cys-646, Cys-652/Cys-665, Cys-659/Cys-678, Cys-680/Cys-691, Cys-707/Cys-715, Cys-720/Cys-740, Cys-756/Cys-776, Cys-779/Cys-799, Cys-815/Cys-835, Cys-838/Cys-858, Cys-876/Cys-896, Cys-912/Cys-932, and Cys-948/Cys-1169. Asn-457 is a glycosylation site (N-linked (GlcNAc...) asparagine). Residues 549–589 (PIDGCLSNPCFPGAKCNSFPDGSWSCGSCPVGFLGNGTHCE) form the EGF-like 1 domain. An N-linked (GlcNAc...) asparagine glycan is attached at Asn-584. Positions 648–692 (PENPCKDKTHSCHKNAECIYLGHFSDPMYKCECQIGYAGDGLICG) constitute an EGF-like 2 domain. 8 TSP type-3 repeats span residues 693 to 728 (EDSD…NSGQ), 729 to 764 (EDFD…NPRQ), 765 to 787 (LDYD…NPAQ), 788 to 823 (IDTD…NTDQ), 824 to 846 (RDTD…NPDQ), 847 to 884 (IDQD…NSNQ), 885 to 920 (ADHD…NPDQ), and 921 to 956 (EDSD…AITE). An N-linked (GlcNAc...) asparagine glycan is attached at Asn-710. The segment at 727–752 (GQEDFDKDGIGDACDEDDDNDGVSDE) is disordered. Over residues 739 to 749 (ACDEDDDNDGV) the composition is skewed to acidic residues. The tract at residues 846 to 938 (QIDQDNDLVG…GDICKDDFDN (93 aa)) is disordered. Residues 847-866 (IDQDNDLVGDQCDNNEDIDD) show a composition bias toward acidic residues. Over residues 870–884 (QNNQDNCPYISNSNQ) the composition is skewed to polar residues. Residues 885 to 895 (ADHDNDGKGDA) show a composition bias toward basic and acidic residues. Residues 896-905 (CDSDDDNDGV) are compositionally biased toward acidic residues. Over residues 925-935 (GDGRGDICKDD) the composition is skewed to basic and acidic residues. Residues 928-930 (RGD) carry the Cell attachment site motif. Residues 960 to 1172 (RNFQMVPLDP…SDLKYECRDA (213 aa)) enclose the TSP C-terminal domain. An N-linked (GlcNAc...) asparagine glycan is attached at Asn-1069.

This sequence belongs to the thrombospondin family. Homotrimer; disulfide-linked. Can bind to fibrinogen, fibronectin, laminin and type V collagen. Interacts (via the TSP type I repeats) with CD36; the interaction conveys an antiangiogenic effect. Interacts (via the TSP type I repeats) with HRG; the interaction blocks the antiangiogenic effect of THBS2 with CD36. Can bind to fibrinogen, fibronectin, laminin.

Functionally, adhesive glycoprotein that mediates cell-to-cell and cell-to-matrix interactions. Ligand for CD36 mediating antiangiogenic properties. In Mus musculus (Mouse), this protein is Thrombospondin-2 (Thbs2).